The primary structure comprises 320 residues: Cytochrome c biogenesis protein CcsA (320 aa).

8 consecutive transmembrane segments (helical) span residues 14-34 (SFFL…YINI), 37-57 (ITIL…TFLL), 68-88 (LSNL…IHLI), 97-117 (WLGI…TLSL), 143-163 (MMLS…ILII), 228-248 (VISL…VWAN), 263-283 (WALI…IKGW), and 289-309 (AIIA…VNLL).

This sequence belongs to the CcmF/CycK/Ccl1/NrfE/CcsA family. As to quaternary structure, may interact with Ccs1.

The protein localises to the plastid. It localises to the chloroplast thylakoid membrane. Its function is as follows. Required during biogenesis of c-type cytochromes (cytochrome c6 and cytochrome f) at the step of heme attachment. In Marchantia polymorpha (Common liverwort), this protein is Cytochrome c biogenesis protein CcsA.